Reading from the N-terminus, the 502-residue chain is Protein Dok-7 (502 aa).

In terms of domain architecture, PH spans 4–109 (SVVVEGYARL…WDARLRYSLG (106 aa)). The region spanning 105–210 (RYSLGEVHRF…RGISPTRGPF (106 aa)) is the IRS-type PTB domain. Disordered stretches follow at residues 210 to 232 (FGLR…RLNH), 249 to 279 (STAS…SDCS), 291 to 358 (TSIQ…GSFS), and 418 to 482 (EVGG…GHPG). Low complexity-rich tracts occupy residues 264-279 (ISGS…SDCS) and 301-316 (AGAK…PLPS). Residues 336–346 (GRQSSSDSGIA) are compositionally biased toward polar residues. The segment covering 347 to 358 (TGSHSSYSGSFS) has biased composition (low complexity). Residues 459–473 (PNEHFRSPSESKKSS) show a composition bias toward basic and acidic residues.

Its subcellular location is the cell membrane. It is found in the synapse. Probable muscle-intrinsic activator of MUSK that plays an essential role in neuromuscular synaptogenesis. Acts in aneural activation of MUSK and subsequent acetylcholine receptor (AchR) clustering in myotubes. This Takifugu rubripes (Japanese pufferfish) protein is Protein Dok-7 (dok7).